A 228-amino-acid chain; its full sequence is 3-dehydroquinate dehydratase (228 aa).

Residues serine 26, 51–53 (EIR), and arginine 84 contribute to the 3-dehydroquinate site. Catalysis depends on histidine 127, which acts as the Proton donor/acceptor. The active-site Schiff-base intermediate with substrate is the lysine 150. Arginine 190, threonine 209, and glutamine 213 together coordinate 3-dehydroquinate.

The protein belongs to the type-I 3-dehydroquinase family. As to quaternary structure, homodimer.

It carries out the reaction 3-dehydroquinate = 3-dehydroshikimate + H2O. It participates in metabolic intermediate biosynthesis; chorismate biosynthesis; chorismate from D-erythrose 4-phosphate and phosphoenolpyruvate: step 3/7. Involved in the third step of the chorismate pathway, which leads to the biosynthesis of aromatic amino acids. Catalyzes the cis-dehydration of 3-dehydroquinate (DHQ) and introduces the first double bond of the aromatic ring to yield 3-dehydroshikimate. This Thermoplasma acidophilum (strain ATCC 25905 / DSM 1728 / JCM 9062 / NBRC 15155 / AMRC-C165) protein is 3-dehydroquinate dehydratase.